The following is a 382-amino-acid chain: SAT4 family membrane protein (382 aa).

A disordered region spans residues 1–22; sequence MFGAELVGRETGGQSTDQPYSY. Asn78 carries N-linked (GlcNAc...) asparagine glycosylation. 2 consecutive transmembrane segments (helical) span residues 80–100 and 112–132; these read SQIL…LLYL and YLSI…NFFL. The N-linked (GlcNAc...) asparagine glycan is linked to Asn147. The next 3 helical transmembrane spans lie at 159-179, 192-212, and 228-248; these read ILVT…LPII, LGIS…IMRL, and WYTE…PTFF. Asn269 carries N-linked (GlcNAc...) asparagine glycosylation.

It belongs to the SAT4 family.

The protein localises to the membrane. The sequence is that of SAT4 family membrane protein from Emericella nidulans (strain FGSC A4 / ATCC 38163 / CBS 112.46 / NRRL 194 / M139) (Aspergillus nidulans).